We begin with the raw amino-acid sequence, 105 residues long: MIPGEVQVAAGDIELNSGRETVSATVANHGDRPVQVGSHYHFFEVNEALVFDRAPTLGFRLDIPAGTAVRFEPGQARTVQLVAYAGKREVYGFQGKVMGALEGRA.

Belongs to the urease beta subunit family. In terms of assembly, heterotrimer of UreA (gamma), UreB (beta) and UreC (alpha) subunits. Three heterotrimers associate to form the active enzyme.

It localises to the cytoplasm. It carries out the reaction urea + 2 H2O + H(+) = hydrogencarbonate + 2 NH4(+). It participates in nitrogen metabolism; urea degradation; CO(2) and NH(3) from urea (urease route): step 1/1. In Pseudomonas putida (strain GB-1), this protein is Urease subunit beta.